A 754-amino-acid polypeptide reads, in one-letter code: uncharacterized protein (754 aa).

Residues S585 and H707 each act as charge relay system in the active site. Positions 733–754 (SHAPPPSRKARSAARRSTDPVR) are disordered.

The protein belongs to the peptidase S9A family.

This is an uncharacterized protein from Sinorhizobium fredii (strain NBRC 101917 / NGR234).